The following is a 784-amino-acid chain: Replication protein A 70 kDa DNA-binding subunit E (784 aa).

The disordered stretch occupies residues 114-224; that stretch reads HPVPGGKHND…NRGPVARNEA (111 aa). 2 stretches are compositionally biased toward polar residues: residues 132 to 148 and 167 to 190; these read KFNTTEQQGSGIRQVNN and SSVPASTTPSTRAYSNPSSGNGVT. A DNA-binding region (OB) is located at residues 241–327; that stretch reads WTIKARVTNK…RNDYEIMLDN (87 aa). The segment at 532–558 adopts a C4-type zinc-finger fold; that stretch reads CPIMNGDRPCSKKVTDNGDGTWRCEKC. Disordered stretches follow at residues 678–707 and 746–784; these read LPINPEGSDYNADVVNTGIGSSGTRDPSSV and AKCPGATKPQEQGQYMGGSYRGTTGSYGGGLPRQHVGSY. Over residues 695–707 the composition is skewed to polar residues; it reads GIGSSGTRDPSSV. Over residues 760-776 the composition is skewed to gly residues; sequence YMGGSYRGTTGSYGGGL.

Belongs to the replication factor A protein 1 family. In terms of assembly, heterotrimer of RPA1, RPA2 and RPA3 (canonical replication protein A complex).

It localises to the nucleus. Component of the replication protein A complex (RPA) required for DNA recombination, repair and replication. The activity of RPA is mediated by single-stranded DNA binding and protein interactions. Probably involved in repair of double-strand DNA breaks (DSBs) induced by genotoxic stresses. The polypeptide is Replication protein A 70 kDa DNA-binding subunit E (RPA1E) (Arabidopsis thaliana (Mouse-ear cress)).